A 195-amino-acid chain; its full sequence is MKRFVIGIGGVTNGGKTTLAKSLQKHLPNCSVISQDDFFKPESEIDIDENGFLQYDVLEALNMEKMMSAVSCWMENPGSSAGPAALESAQGVPILIIEGFLLFNYKPLDTIWNRSYFLTVPYEECKRRRSTRVYEPPDPPGYFDGHVWPMYLKHRQEMSSITWDIVYLDGTRSEEDLFSQVYEDVKQELEKQNGL.

10 to 18 (GVTNGGKTT) serves as a coordination point for ATP. The Mg(2+) site is built by T17 and D36. D36 functions as the Proton acceptor in the catalytic mechanism. Substrate is bound by residues 36–39 (DDFF) and 55–56 (YD). ATP is bound at residue R128. Substrate is bound by residues R129 and 134-135 (YE). ATP contacts are provided by residues 132–134 (RVY) and 172–174 (RSE).

It belongs to the uridine kinase family. NRK subfamily. As to quaternary structure, monomer.

It catalyses the reaction beta-nicotinamide D-riboside + ATP = beta-nicotinamide D-ribonucleotide + ADP + H(+). The catalysed reaction is beta-D-ribosylnicotinate + ATP = nicotinate beta-D-ribonucleotide + ADP + H(+). It functions in the pathway cofactor biosynthesis; NAD(+) biosynthesis. Functionally, catalyzes the phosphorylation of nicotinamide riboside (NR) and nicotinic acid riboside (NaR) to form nicotinamide mononucleotide (NMN) and nicotinic acid mononucleotide (NaMN). This is Nicotinamide riboside kinase 1 (Nmrk1) from Mus musculus (Mouse).